The following is a 228-amino-acid chain: Phosphoribosylformylglycinamidine synthase subunit PurQ (228 aa).

Residues 3 to 226 form the Glutamine amidotransferase type-1 domain; it reads FAVIVFPGSN…IANWRDSYAI (224 aa). The active-site Nucleophile is C87. Catalysis depends on residues H195 and E197.

As to quaternary structure, part of the FGAM synthase complex composed of 1 PurL, 1 PurQ and 2 PurS subunits.

It is found in the cytoplasm. The enzyme catalyses N(2)-formyl-N(1)-(5-phospho-beta-D-ribosyl)glycinamide + L-glutamine + ATP + H2O = 2-formamido-N(1)-(5-O-phospho-beta-D-ribosyl)acetamidine + L-glutamate + ADP + phosphate + H(+). It catalyses the reaction L-glutamine + H2O = L-glutamate + NH4(+). It participates in purine metabolism; IMP biosynthesis via de novo pathway; 5-amino-1-(5-phospho-D-ribosyl)imidazole from N(2)-formyl-N(1)-(5-phospho-D-ribosyl)glycinamide: step 1/2. In terms of biological role, part of the phosphoribosylformylglycinamidine synthase complex involved in the purines biosynthetic pathway. Catalyzes the ATP-dependent conversion of formylglycinamide ribonucleotide (FGAR) and glutamine to yield formylglycinamidine ribonucleotide (FGAM) and glutamate. The FGAM synthase complex is composed of three subunits. PurQ produces an ammonia molecule by converting glutamine to glutamate. PurL transfers the ammonia molecule to FGAR to form FGAM in an ATP-dependent manner. PurS interacts with PurQ and PurL and is thought to assist in the transfer of the ammonia molecule from PurQ to PurL. In Oceanobacillus iheyensis (strain DSM 14371 / CIP 107618 / JCM 11309 / KCTC 3954 / HTE831), this protein is Phosphoribosylformylglycinamidine synthase subunit PurQ.